We begin with the raw amino-acid sequence, 515 residues long: Cytidine and dCMP deaminase domain-containing protein 1 (515 aa).

Composition is skewed to polar residues over residues 1-11 (MKEAGQMQNLE) and 18-27 (SVSTQTGSMT). 2 disordered regions span residues 1–27 (MKEAGQMQNLESARAGRSVSTQTGSMT) and 56–83 (RQKSQKNEEGKHGPLGDNEEMTRVSTDK). The span at 60–83 (QKNEEGKHGPLGDNEEMTRVSTDK) shows a compositional bias: basic and acidic residues. One can recognise a CMP/dCMP-type deaminase 1 domain in the interval 71–169 (GDNEEMTRVS…SLLTEASSSE (99 aa)). The Zn(2+) site is built by His-110, Cys-135, and Cys-138. Positions 272–284 (NLRQNMKDLILLL) match the Nuclear export signal motif. The 166-residue stretch at 318–483 (EIARHCMVQA…LNPSEAYGLE (166 aa)) folds into the CMP/dCMP-type deaminase 2 domain. Zn(2+) is bound at residue His-399. The active-site Proton donor is Glu-401. Zn(2+)-binding residues include Cys-427 and Cys-430. Residues 481–515 (GLEQNEPERRENGVLRPVPQKEEQHQDKKLRLGIH) form a disordered region. Basic and acidic residues predominate over residues 486 to 515 (EPERRENGVLRPVPQKEEQHQDKKLRLGIH). The short motif at 489–511 (RRENGVLRPVPQKEEQHQDKKLR) is the Bipartite nuclear localization signal element.

It belongs to the cytidine and deoxycytidylate deaminase family. Requires Zn(2+) as cofactor.

The protein localises to the cytoplasm. The protein resides in the nucleus. The enzyme catalyses 2'-deoxycytidine + H2O + H(+) = 2'-deoxyuridine + NH4(+). It catalyses the reaction cytidine + H2O + H(+) = uridine + NH4(+). Its function is as follows. Catalyzes the deamination of cytidine and deoxycytidine into uridine and deoxyuridine, respectively. May play an important role in testicular development and spermatogenesis. This chain is Cytidine and dCMP deaminase domain-containing protein 1 (CDADC1), found in Macaca fascicularis (Crab-eating macaque).